The chain runs to 465 residues: tRNA-2-methylthio-N(6)-dimethylallyladenosine synthase (465 aa).

An MTTase N-terminal domain is found at 5-125 (RKLHIKSFGC…LPELLEKARR (121 aa)). [4Fe-4S] cluster is bound by residues Cys14, Cys50, Cys88, Cys166, Cys170, and Cys173. In terms of domain architecture, Radical SAM core spans 152–382 (RARGVSAFVT…QLQGLIDSQQ (231 aa)). A TRAM domain is found at 387–449 (RASIGTTVDV…RYSLIGELVK (63 aa)).

It belongs to the methylthiotransferase family. MiaB subfamily. In terms of assembly, monomer. [4Fe-4S] cluster serves as cofactor.

Its subcellular location is the cytoplasm. The catalysed reaction is N(6)-dimethylallyladenosine(37) in tRNA + (sulfur carrier)-SH + AH2 + 2 S-adenosyl-L-methionine = 2-methylsulfanyl-N(6)-dimethylallyladenosine(37) in tRNA + (sulfur carrier)-H + 5'-deoxyadenosine + L-methionine + A + S-adenosyl-L-homocysteine + 2 H(+). Functionally, catalyzes the methylthiolation of N6-(dimethylallyl)adenosine (i(6)A), leading to the formation of 2-methylthio-N6-(dimethylallyl)adenosine (ms(2)i(6)A) at position 37 in tRNAs that read codons beginning with uridine. The sequence is that of tRNA-2-methylthio-N(6)-dimethylallyladenosine synthase from Rhodopseudomonas palustris (strain BisA53).